Here is a 986-residue protein sequence, read N- to C-terminus: Epidermin biosynthesis protein EpiB (986 aa).

It to B.subtilis SpaB and L.lactis NisB.

Its subcellular location is the cell membrane. Its function is as follows. Involved in the post-translational modification of the lantibiotic epidermin. This chain is Epidermin biosynthesis protein EpiB (epiB), found in Staphylococcus epidermidis.